Reading from the N-terminus, the 459-residue chain is Ribulose bisphosphate carboxylase (459 aa).

Asn111 contributes to the substrate binding site. Catalysis depends on Lys166, which acts as the Proton acceptor. Lys168 provides a ligand contact to substrate. Residues Lys191, Asp193, and Glu194 each coordinate Mg(2+). At Lys191 the chain carries N6-carboxylysine. His287 functions as the Proton acceptor in the catalytic mechanism. Substrate-binding residues include Arg288, His321, and Ser368.

The protein belongs to the RuBisCO large chain family. Type II subfamily. Homodimer. Requires Mg(2+) as cofactor.

It is found in the cytoplasm. The catalysed reaction is 2 (2R)-3-phosphoglycerate + 2 H(+) = D-ribulose 1,5-bisphosphate + CO2 + H2O. The enzyme catalyses D-ribulose 1,5-bisphosphate + O2 = 2-phosphoglycolate + (2R)-3-phosphoglycerate + 2 H(+). RuBisCO catalyzes two reactions: the carboxylation of D-ribulose 1,5-bisphosphate, the primary event in carbon dioxide fixation, as well as the oxidative fragmentation of the pentose substrate. Both reactions occur simultaneously and in competition at the same active site. The chain is Ribulose bisphosphate carboxylase from Halothiobacillus neapolitanus (strain ATCC 23641 / c2) (Thiobacillus neapolitanus).